Here is a 180-residue protein sequence, read N- to C-terminus: E1B protein, small T-antigen (180 aa).

The interval Gly-142–Asn-180 is disordered. Residues Gln-157–Ser-172 show a composition bias toward basic and acidic residues.

It belongs to the adenoviridae E1B 19 kDa protein family.

This Simian adenovirus serotype 7 (SAdV-7) protein is E1B protein, small T-antigen.